Here is a 597-residue protein sequence, read N- to C-terminus: uncharacterized protein (597 aa).

The VWFA domain occupies 378–575; that stretch reads EVSFVVDNSG…YLPRELLRTL (198 aa).

This is an uncharacterized protein from Treponema pallidum (strain Nichols).